Consider the following 294-residue polypeptide: Diaminopimelate epimerase (294 aa).

Substrate is bound by residues Asn15, Gln47, and Asn67. Catalysis depends on Cys76, which acts as the Proton donor. Residues 77–78, Asn163, Asn197, and 215–216 each bind substrate; these read GN and ER. Catalysis depends on Cys224, which acts as the Proton acceptor. Substrate is bound at residue 225-226; sequence GS.

This sequence belongs to the diaminopimelate epimerase family. Homodimer.

It localises to the cytoplasm. The enzyme catalyses (2S,6S)-2,6-diaminopimelate = meso-2,6-diaminopimelate. Its pathway is amino-acid biosynthesis; L-lysine biosynthesis via DAP pathway; DL-2,6-diaminopimelate from LL-2,6-diaminopimelate: step 1/1. Catalyzes the stereoinversion of LL-2,6-diaminopimelate (L,L-DAP) to meso-diaminopimelate (meso-DAP), a precursor of L-lysine and an essential component of the bacterial peptidoglycan. The chain is Diaminopimelate epimerase from Mesorhizobium japonicum (strain LMG 29417 / CECT 9101 / MAFF 303099) (Mesorhizobium loti (strain MAFF 303099)).